The sequence spans 242 residues: Glutathione S-transferase 3 (242 aa).

The 79-residue stretch at 1 to 79 (MIVLHHLKNS…HLVRKYGPSF (79 aa)) folds into the GST N-terminal domain. Residues 85–234 (DVAELEKYEL…ERYSHPPTPP (150 aa)) form the GST C-terminal domain. At serine 228 the chain carries Phosphoserine. Threonine 232 is subject to Phosphothreonine.

It belongs to the GST superfamily. As to quaternary structure, interacts with sad1.

The protein localises to the cytoplasm. The catalysed reaction is RX + glutathione = an S-substituted glutathione + a halide anion + H(+). Functionally, may have a role in the detoxification of various heavy metals. The polypeptide is Glutathione S-transferase 3 (gst3) (Schizosaccharomyces pombe (strain 972 / ATCC 24843) (Fission yeast)).